A 253-amino-acid chain; its full sequence is Phosphoglycerate mutase 2 (253 aa).

T3 bears the Phosphothreonine mark. Substrate is bound by residues 10–17, 23–24, R62, 89–92, K100, and 116–117; these read RHGESTWN, CG, ERHY, and RR. H11 (tele-phosphohistidine intermediate) is an active-site residue. The residue at position 14 (S14) is a Phosphoserine. Catalysis depends on E89, which acts as the Proton donor/acceptor. A Phosphoserine modification is found at S118. Phosphotyrosine occurs at positions 132 and 133. The residue at position 135 (S135) is a Phosphoserine. The residue at position 152 (T152) is a Phosphothreonine. 187 to 188 is a binding site for substrate; that stretch reads GN.

The protein belongs to the phosphoglycerate mutase family. BPG-dependent PGAM subfamily. Homodimer.

The enzyme catalyses (2R)-2-phosphoglycerate = (2R)-3-phosphoglycerate. It catalyses the reaction (2R)-3-phospho-glyceroyl phosphate = (2R)-2,3-bisphosphoglycerate + H(+). Functionally, interconversion of 3- and 2-phosphoglycerate with 2,3-bisphosphoglycerate as the primer of the reaction. Can also catalyze the reaction of EC 5.4.2.4 (synthase), but with a reduced activity. This Bos taurus (Bovine) protein is Phosphoglycerate mutase 2 (PGAM2).